Reading from the N-terminus, the 530-residue chain is Bifunctional purine biosynthesis protein PurH (530 aa).

Residues 1-149 (MASDFLPVHR…KNFARVAVAT (149 aa)) form the MGS-like domain.

Belongs to the PurH family.

It carries out the reaction (6R)-10-formyltetrahydrofolate + 5-amino-1-(5-phospho-beta-D-ribosyl)imidazole-4-carboxamide = 5-formamido-1-(5-phospho-D-ribosyl)imidazole-4-carboxamide + (6S)-5,6,7,8-tetrahydrofolate. It catalyses the reaction IMP + H2O = 5-formamido-1-(5-phospho-D-ribosyl)imidazole-4-carboxamide. Its pathway is purine metabolism; IMP biosynthesis via de novo pathway; 5-formamido-1-(5-phospho-D-ribosyl)imidazole-4-carboxamide from 5-amino-1-(5-phospho-D-ribosyl)imidazole-4-carboxamide (10-formyl THF route): step 1/1. The protein operates within purine metabolism; IMP biosynthesis via de novo pathway; IMP from 5-formamido-1-(5-phospho-D-ribosyl)imidazole-4-carboxamide: step 1/1. The sequence is that of Bifunctional purine biosynthesis protein PurH from Xylella fastidiosa (strain M12).